A 249-amino-acid chain; its full sequence is uncharacterized protein (249 aa).

A run of 2 helical transmembrane segments spans residues 49–69 (ILLS…CYLL) and 223–243 (IVMS…VHHL).

It is found in the cell membrane. This is an uncharacterized protein from Bacillus anthracis.